Reading from the N-terminus, the 345-residue chain is 4-hydroxyproline 2-epimerase (345 aa).

Residue glutamine 85 coordinates substrate. Serine 93 functions as the Proton acceptor in the catalytic mechanism. Substrate is bound by residues 94–95 (GS) and aspartate 251. Catalysis depends on cysteine 255, which acts as the Proton donor. 256 to 257 (GT) is a substrate binding site.

This sequence belongs to the proline racemase family.

It catalyses the reaction trans-4-hydroxy-L-proline = cis-4-hydroxy-D-proline. Functionally, catalyzes the epimerization of trans-4-hydroxy-L-proline (t4LHyp) to cis-4-hydroxy-D-proline (c4DHyp). May be involved in a degradation pathway of t4LHyp. Can also catalyze the epimerization of trans-3-hydroxy-L-proline (t3LHyp) to cis-3-hydroxy-D-proline (c3DHyp) in vitro, albeit with 2-fold lower efficiency. Displays no proline racemase activity. In Rhizobium etli (strain ATCC 51251 / DSM 11541 / JCM 21823 / NBRC 15573 / CFN 42), this protein is 4-hydroxyproline 2-epimerase.